The primary structure comprises 362 residues: GMP reductase (362 aa).

NADP(+)-binding positions include 26–27, Lys-78, 129–131, and 180–181; these read SR, DVA, and IG. Gly-181, Gly-183, and Cys-186 together coordinate K(+). Catalysis depends on Cys-186, which acts as the Thioimidate intermediate. Thr-188 acts as the Proton donor/acceptor in catalysis. A K(+)-binding site is contributed by Arg-189. Residues 219-221, 242-243, 268-270, and 286-290 contribute to the GMP site; these read DGG, GG, GMS, and RASEG. NADP(+) contacts are provided by residues Met-269, 285–286, and 314–317; these read YR and STCT.

It belongs to the IMPDH/GMPR family.

It catalyses the reaction IMP + NH4(+) + NADP(+) = GMP + NADPH + 2 H(+). Catalyzes the irreversible NADPH-dependent deamination of GMP to IMP. It functions in the conversion of nucleobase, nucleoside and nucleotide derivatives of G to A nucleotides, and in maintaining the intracellular balance of A and G nucleotides. This Phytophthora infestans (Potato late blight agent) protein is GMP reductase.